The following is a 74-amino-acid chain: Antimicrobial peptide HsAp4 (74 aa).

Positions 1-21 (MSRRRILILVLVTMLVKTMAG) are cleaved as a signal peptide. The propeptide occupies 22-33 (MESKWVETTYEI). Arginine 65 bears the Arginine amide mark. A propeptide spanning residues 69–74 (AISEQT) is cleaved from the precursor.

Belongs to the non-disulfide-bridged peptide (NDBP) superfamily. Medium-length antimicrobial peptide (group 3) family. In terms of tissue distribution, expressed by the venom gland.

It localises to the secreted. It is found in the target cell membrane. Functionally, possesses antimicrobial activity against both Gram-negative and Gram-positive bacteria, as well as against the fungus C.tropicalis. Also possesses a relatively high hemolytic activity. May act by disrupting the integrity of the bacterial cell membrane. The chain is Antimicrobial peptide HsAp4 from Heterometrus spinifer (Asia giant forest scorpion).